We begin with the raw amino-acid sequence, 304 residues long: Acetyl-coenzyme A carboxylase carboxyl transferase subunit beta (304 aa).

The region spanning 23–292 is the CoA carboxyltransferase N-terminal domain; that stretch reads VWTKCDSCGQ…PNPEAPREGV (270 aa). 4 residues coordinate Zn(2+): C27, C30, C46, and C49. Residues 27 to 49 form a C4-type zinc finger; the sequence is CDSCGQVLYRAELERNLEVCPKC. A disordered region spans residues 285-304; it reads PEAPREGVVVPPVPDQEPEA. Residues 295 to 304 are compositionally biased toward pro residues; it reads PPVPDQEPEA.

This sequence belongs to the AccD/PCCB family. As to quaternary structure, acetyl-CoA carboxylase is a heterohexamer composed of biotin carboxyl carrier protein (AccB), biotin carboxylase (AccC) and two subunits each of ACCase subunit alpha (AccA) and ACCase subunit beta (AccD). Requires Zn(2+) as cofactor.

Its subcellular location is the cytoplasm. It catalyses the reaction N(6)-carboxybiotinyl-L-lysyl-[protein] + acetyl-CoA = N(6)-biotinyl-L-lysyl-[protein] + malonyl-CoA. It participates in lipid metabolism; malonyl-CoA biosynthesis; malonyl-CoA from acetyl-CoA: step 1/1. Its function is as follows. Component of the acetyl coenzyme A carboxylase (ACC) complex. Biotin carboxylase (BC) catalyzes the carboxylation of biotin on its carrier protein (BCCP) and then the CO(2) group is transferred by the transcarboxylase to acetyl-CoA to form malonyl-CoA. This chain is Acetyl-coenzyme A carboxylase carboxyl transferase subunit beta, found in Shigella sonnei (strain Ss046).